Reading from the N-terminus, the 199-residue chain is NAD(P)H-quinone oxidoreductase chain 6 (199 aa).

5 helical membrane passes run 9–29, 32–52, 61–81, 102–122, and 143–163; these read IVSFAILAAMMIGSAIGVVLL, VVYSAFLLGGVFISIAGLYLL, AQVLIYVGAVNVLILFAIMLV, LVCAGIFALLSAMVLTTPWAI, and FLLPFELASILLLMALVGAIV.

It belongs to the complex I subunit 6 family.

The protein localises to the membrane. It catalyses the reaction a plastoquinone + NADH + (n+1) H(+)(in) = a plastoquinol + NAD(+) + n H(+)(out). The enzyme catalyses a plastoquinone + NADPH + (n+1) H(+)(in) = a plastoquinol + NADP(+) + n H(+)(out). Functionally, NDH-1 shuttles electrons from NAD(P)H, via FMN and iron-sulfur (Fe-S) centers, to quinones in the respiratory chain. The immediate electron acceptor for the enzyme in this species is believed to be plastoquinone. Couples the redox reaction to proton translocation (for every two electrons transferred, four hydrogen ions are translocated across the cytoplasmic membrane), and thus conserves the redox energy in a proton gradient. The chain is NAD(P)H-quinone oxidoreductase chain 6 (ndhG) from Leptolyngbya boryana (Plectonema boryanum).